We begin with the raw amino-acid sequence, 113 residues long: MKSLRVLLVILWLQLSWVWSQQKEVEQNSGPLSVPEGAIASLNCTYSDRGSQSFFWYRQYSGKSPELIMFIYSNGDKEDGRFTAQLNKASQYVSLLIRDSQPSDSATYLCAVN.

The N-terminal stretch at 1–20 (MKSLRVLLVILWLQLSWVWS) is a signal peptide. An Ig-like domain is found at 23-113 (KEVEQNSGPL…DSATYLCAVN (91 aa)). N-linked (GlcNAc...) asparagine glycosylation occurs at N43. A disulfide bridge links C44 with C110.

As to quaternary structure, alpha-beta TR is a heterodimer composed of an alpha and beta chain; disulfide-linked. The alpha-beta TR is associated with the transmembrane signaling CD3 coreceptor proteins to form the TR-CD3 (TcR or TCR). The assembly of alpha-beta TR heterodimers with CD3 occurs in the endoplasmic reticulum where a single alpha-beta TR heterodimer associates with one CD3D-CD3E heterodimer, one CD3G-CD3E heterodimer and one CD247 homodimer forming a stable octameric structure. CD3D-CD3E and CD3G-CD3E heterodimers preferentially associate with TR alpha and TR beta chains, respectively. The association of the CD247 homodimer is the last step of TcR assembly in the endoplasmic reticulum and is required for transport to the cell surface.

It localises to the cell membrane. Functionally, v region of the variable domain of T cell receptor (TR) alpha chain that participates in the antigen recognition. Alpha-beta T cell receptors are antigen specific receptors which are essential to the immune response and are present on the cell surface of T lymphocytes. Recognize peptide-major histocompatibility (MH) (pMH) complexes that are displayed by antigen presenting cells (APC), a prerequisite for efficient T cell adaptive immunity against pathogens. Binding of alpha-beta TR to pMH complex initiates TR-CD3 clustering on the cell surface and intracellular activation of LCK that phosphorylates the ITAM motifs of CD3G, CD3D, CD3E and CD247 enabling the recruitment of ZAP70. In turn ZAP70 phosphorylates LAT, which recruits numerous signaling molecules to form the LAT signalosome. The LAT signalosome propagates signal branching to three major signaling pathways, the calcium, the mitogen-activated protein kinase (MAPK) kinase and the nuclear factor NF-kappa-B (NF-kB) pathways, leading to the mobilization of transcription factors that are critical for gene expression and essential for T cell growth and differentiation. The T cell repertoire is generated in the thymus, by V-(D)-J rearrangement. This repertoire is then shaped by intrathymic selection events to generate a peripheral T cell pool of self-MH restricted, non-autoaggressive T cells. Post-thymic interaction of alpha-beta TR with the pMH complexes shapes TR structural and functional avidity. This Homo sapiens (Human) protein is T cell receptor alpha variable 12-2.